The sequence spans 57 residues: Gene 19.3 protein (57 aa).

The chain is Gene 19.3 protein (19.3) from Escherichia coli (Bacteriophage T3).